A 707-amino-acid polypeptide reads, in one-letter code: MYAILAEKPSAAKAYAQALNGKRQGRIYVAPPSSLLPEGALICAAVGHILEFLEPGELNEKYKSYSLDSLPIIIDLFQYKVVSDKKEVLQRIKDTIFDKRVKTIILATDAAAEGEYIGRNILYRLQCKKTIKRLWTSSMTATSIQKAFSQLKADAETLPLYYQAKARAESDYMIGLTLSRAYGILLKEQGIVPHNTTISLGRVQTPLLAEIVKRERLIEQFTAENFWTVKATFNNQGNVYEGEWFHEKENRIFKEEQAEQLCELVRNQSSTIMEMKEEMRTYQPPLLYXLSTLQMDAGNAFGFKPAETLKYAQSLYDKGYLSYPRTQDERITESDARELENNIQFLSGHDTFGALFPLPVSTLMNNKRYIGEVTDHHALLITDKIPKDKDLSEDEKSIYHLVVKRILAAHYPDVAMSHKEIITKVMDRFTFRSKGKELLSKGWHHIIPPTNENDIMLPTLLKGSEGVVTDTLTTKSKTKPPNRYTSSSLIGFMKNAAQAIEDEDRKSISNLPLGTEATRAGLITLLESRKYIEWKKNKVYPTLLGITVVDSIKRGSVIKSPILTAKWDVKLNEIGASLYNHKDFIAHSKKLSSVLFEEVKTYSSTWNQNGVERIKSESIGACLLCGSNVVLRKGKHGEFYGCSNYKDSGCTFNLPFKVLNKKLSKKQLMELLKNEKTDIIKGFKWKDKTFNAPLVWNREDQKVQFGK.

In terms of domain architecture, Toprim spans 1–140 (MYAILAEKPS…IKRLWTSSMT (140 aa)). The region spanning 157–596 (TLPLYYQAKA…HSKKLSSVLF (440 aa)) is the Topo IA-type catalytic domain. The segment at 199–204 (SLGRVQ) is interaction with DNA. The active-site O-(5'-phospho-DNA)-tyrosine intermediate is the tyrosine 323.

The protein belongs to the type IA topoisomerase family. In terms of assembly, monomer.

The catalysed reaction is ATP-independent breakage of single-stranded DNA, followed by passage and rejoining.. Functionally, releases the supercoiling and torsional tension of DNA, which is introduced during the DNA replication and transcription, by transiently cleaving and rejoining one strand of the DNA duplex. Introduces a single-strand break via transesterification at a target site in duplex DNA. The scissile phosphodiester is attacked by the catalytic tyrosine of the enzyme, resulting in the formation of a DNA-(5'-phosphotyrosyl)-enzyme intermediate and the expulsion of a 3'-OH DNA strand. The free DNA strand then undergoes passage around the unbroken strand, thus removing DNA supercoils. Finally, in the religation step, the DNA 3'-OH attacks the covalent intermediate to expel the active-site tyrosine and restore the DNA phosphodiester backbone. In Alkalihalophilus pseudofirmus (strain ATCC BAA-2126 / JCM 17055 / OF4) (Bacillus pseudofirmus), this protein is DNA topoisomerase 1 (topA).